We begin with the raw amino-acid sequence, 424 residues long: S-phase kinase-associated protein 2 (424 aa).

The interval 1 to 220 (MHRKHLQEIP…LSLEGLRLSD (220 aa)) is mediates interaction with hepatitis C virus non-structural protein NS5A. The segment at 39–73 (SALEKEEPDSENIPQELLSNLGHPESPPRKRLKSK) is disordered. A Phosphoserine modification is found at Ser-64. The Nuclear localization signal motif lies at 67 to 73 (RKRLKSK). N6-acetyllysine; by p300/EP300 occurs at positions 68 and 71. Phosphoserine is present on residues Ser-72 and Ser-75. The F-box domain maps to 94-140 (GVSWDSLPDELLLGIFSCLCLPELLKVSGVCKRWYRLASDESLWQTL). LRR repeat units lie at residues 151-176 (VTGRLLSQGVIAFRCPRSFMDQPLAE), 177-204 (HFSPFRVQHMDLSNSVIEVSTLHGILSQ), 210-234 (NLSLEGLRLSDPIVNTLAKNSNLVR), 235-257 (LNLSGCSGFSEFALQTLLSSCSR), 258-284 (LDELNLSWCFDFTEKHVQVAVAHVSET), 286-308 (TQLNLSGYRKNLQKSDLSTLVRR), 309-330 (CPNLVHLDLSDSVMLKNDCFQE), 334-356 (LNYLQHLSLSRCYDIIPETLLEL), 359-378 (IPTLKTLQVFGIVPDGTLQL), and 380-401 (KEALPHLQINCSHFTTIARPTI). Ser-179 carries the post-translational modification Phosphoserine. The tract at residues 402–424 (GNKKNQEIWGIKCRLTLQKPSCL) is mediates interaction with IFI27.

In terms of assembly, part of a SCF(SKP2) complex consisting of CUL1, RBX1, SKP1 and SKP2. Component of a SCF(SKP2)-like complex containing CUL1, SKP1, TRIM21 and SKP2. Interacts directly with CUL1 and SKP1. Interacts with CKS1. Interacts with ASB2 which is the substrate-recognition component of a probable ECS E3 ubiquitin-protein ligase complex; ASB2 is likely to bridge the formation of dimeric E3-ubiquitin-protein ligase complexes composed of an ECS complex and an SCF(SKP2) complex. Interacts with the cyclin-A-CDK2 complex. Interacts with ORC1, phosphorylated CDT1, phosphorylated RBL2, ELF4, phosphorylated RAG2, FOXO1, UBP43, MYC, TOB1, TAL1 and KMT2A/MLL1. Interacts with TRIM21. Interacts with cyclin-E. Interacts with IFI27; promotes the ubiquitin-mediated proteasomal degradation of hepatitis C virus/HCV non-structural protein NS5A. Interacts with CARM1. (Microbial infection) Interacts with hepatitis C virus/HCV non-structural protein NS5A; promotes the ubiquitin-mediated proteasomal degradation of NS5A. Post-translationally, phosphorylated on serine and threonine resudues in response to DNA damage, promoting 'Lys-63'-linked ubiquitination of NBN. In terms of processing, ubiquitinated by the APC/C complex, leading to its degradation by the proteasome. Deubiquitinated by USP13. Acetylation at Lys-68 and Lys-71 increases stability through impairment of APC/C-mediated proteolysis and promotes cytoplasmic retention. Deacetylated by SIRT3.

The protein localises to the cytoplasm. Its subcellular location is the nucleus. The protein operates within protein modification; protein ubiquitination. Substrate recognition component of a SCF (SKP1-CUL1-F-box protein) E3 ubiquitin-protein ligase complex which mediates the ubiquitination and subsequent proteasomal degradation of target proteins involved in cell cycle progression, signal transduction and transcription. Specifically recognizes phosphorylated CDKN1B/p27kip and is involved in regulation of G1/S transition. Degradation of CDKN1B/p27kip also requires CKS1. Recognizes target proteins ORC1, CDT1, RBL2, KMT2A/MLL1, CDK9, RAG2, NBN, FOXO1, UBP43, YTHDF2, and probably MYC, TOB1 and TAL1. Degradation of TAL1 also requires STUB1. Recognizes CDKN1A in association with CCNE1 or CCNE2 and CDK2. Promotes ubiquitination and destruction of CDH1 in a CK1-dependent manner, thereby regulating cell migration. Following phosphorylation in response to DNA damage, mediates 'Lys-63'-linked ubiquitination of NBN, promoting ATM recruitment to DNA damage sites and DNA repair via homologous recombination. Its function is as follows. Through the ubiquitin-mediated proteasomal degradation of hepatitis C virus non-structural protein 5A, has an antiviral activity towards that virus. The sequence is that of S-phase kinase-associated protein 2 (SKP2) from Homo sapiens (Human).